The following is a 59-amino-acid chain: Membrane-associated ATPase epsilon chain (59 aa).

To E.hirae NtpH. In terms of assembly, sul-ATPase is composed of six (or maybe five) subunits: alpha, beta, delta, gamma, C (proteolipid), and possibly epsilon.

It catalyses the reaction ATP + H2O + 4 H(+)(in) = ADP + phosphate + 5 H(+)(out). The polypeptide is Membrane-associated ATPase epsilon chain (atpE) (Sulfurisphaera tokodaii (strain DSM 16993 / JCM 10545 / NBRC 100140 / 7) (Sulfolobus tokodaii)).